The following is a 467-amino-acid chain: D-hydantoinase (467 aa).

The Zn(2+) site is built by H65, H67, and K156. K156 bears the N6-carboxylysine mark. Substrate is bound at residue Y161. Residues H189 and H245 each coordinate Zn(2+). S294 contacts substrate. A Zn(2+)-binding site is contributed by D321. N343 contributes to the substrate binding site.

It belongs to the metallo-dependent hydrolases superfamily. Hydantoinase/dihydropyrimidinase family. In terms of assembly, homotetramer. Zn(2+) is required as a cofactor. Post-translationally, carboxylation allows a single lysine to coordinate two zinc ions.

Its function is as follows. Catalyzes the stereospecific hydrolysis of the cyclic amide bond of D-hydantoin derivatives. This chain is D-hydantoinase (hyuA), found in Streptomyces coelicolor (strain ATCC BAA-471 / A3(2) / M145).